A 935-amino-acid chain; its full sequence is Ribonuclease E (935 aa).

The region spanning 39–119 (ANIYKGKITR…GNKGAALTTF (81 aa)) is the S1 motif domain. Residues Asp302 and Asp345 each contribute to the Mg(2+) site. Zn(2+) is bound by residues Cys403 and Cys406. Residues 403 to 406 (CPRC) are required for zinc-mediated homotetramerization and catalytic activity. Disordered regions lie at residues 571–669 (TKSE…DLRK) and 698–743 (VQNN…KSPM). 2 stretches are compositionally biased toward basic and acidic residues: residues 593 to 625 (RSQD…ERNQ) and 701 to 719 (NDEK…ERQR). Residues 720 to 734 (RTPRHLRAANNQRRR) show a composition bias toward basic residues.

It belongs to the RNase E/G family. RNase E subfamily. Component of the RNA degradosome, which is a multiprotein complex involved in RNA processing and mRNA degradation. Within the RNA degradosome, RNase E assembles into a homotetramer formed by a dimer of dimers. The cofactor is Zn(2+). Mg(2+) is required as a cofactor.

The protein resides in the cytoplasm. Its subcellular location is the cell inner membrane. It carries out the reaction Endonucleolytic cleavage of single-stranded RNA in A- and U-rich regions.. Endoribonuclease that plays a central role in RNA processing and decay. Required for the maturation of 5S and 16S rRNAs and the majority of tRNAs. Also involved in the degradation of most mRNAs. This is Ribonuclease E from Haemophilus influenzae (strain ATCC 51907 / DSM 11121 / KW20 / Rd).